Consider the following 124-residue polypeptide: Small ribosomal subunit protein uS12 (124 aa).

The residue at position 89 (Asp-89) is a 3-methylthioaspartic acid.

The protein belongs to the universal ribosomal protein uS12 family. As to quaternary structure, part of the 30S ribosomal subunit. Contacts proteins S8 and S17. May interact with IF1 in the 30S initiation complex.

In terms of biological role, with S4 and S5 plays an important role in translational accuracy. Its function is as follows. Interacts with and stabilizes bases of the 16S rRNA that are involved in tRNA selection in the A site and with the mRNA backbone. Located at the interface of the 30S and 50S subunits, it traverses the body of the 30S subunit contacting proteins on the other side and probably holding the rRNA structure together. The combined cluster of proteins S8, S12 and S17 appears to hold together the shoulder and platform of the 30S subunit. This Histophilus somni (strain 129Pt) (Haemophilus somnus) protein is Small ribosomal subunit protein uS12.